We begin with the raw amino-acid sequence, 809 residues long: Chloride channel protein F (809 aa).

Residues M1–N65 are Cytoplasmic-facing. Transmembrane regions (helical) follow at residues F66–V86, L110–I130, F152–L172, A218–F238, F246–I266, L295–L315, I333–L353, G395–I415, I425–L445, V459–I479, and L486–L506. Positions M539 to L597 constitute a CBS 1 domain. Disordered stretches follow at residues P604–N646 and N692–S729. Residues N620–N646 are compositionally biased toward low complexity. One can recognise a CBS 2 domain in the interval I756 to H809.

This sequence belongs to the chloride channel (TC 2.A.49) family.

The protein resides in the membrane. Its function is as follows. Voltage-gated chloride channel. Chloride channels may have several functions including the regulation of cell volume, membrane potential stabilization and signal transduction. The protein is Chloride channel protein F (clcF) of Dictyostelium discoideum (Social amoeba).